The chain runs to 3589 residues: D-lysergyl-peptide-synthetase subunit 1 (3589 aa).

The interval 344–742 (NCHSRPDSLA…IGRKDLQVKV (399 aa)) is adenylation (A) domain 1. A Carrier 1 domain is found at 883 to 952 (VERRLQLLFA…KLRDLAAASS (70 aa)). Residue Ser915 is modified to O-(pantetheine 4'-phosphoryl)serine. The interval 995–1380 (EDIYPCTSLQ…SQFQHILTQI (386 aa)) is condensation (C) domain 1. An adenylation (A) domain 2 region spans residues 1424–1826 (QAKAQMQPEA…RRKDSQVKLR (403 aa)). The Carrier 2 domain maps to 1974–2042 (LERELQKIWA…TIEKLAAAAV (69 aa)). Ser2006 is subject to O-(pantetheine 4'-phosphoryl)serine. A condensation (C) domain 2 region spans residues 2087 to 2509 (VEDIYPCSPI…IEMLDEEHRS (423 aa)). The adenylation (A) domain 3 stretch occupies residues 2534–2929 (CLESPESPAI…GRKDDQVKIR (396 aa)). The Carrier 3 domain maps to 3064 to 3132 (LETRLQELVG…RLSELAVVLN (69 aa)). Position 3096 is an O-(pantetheine 4'-phosphoryl)serine (Ser3096). The tract at residues 3187–3585 (TNFIALHFSQ…TYPESLVSEL (399 aa)) is cyclization (Cyc) domain.

This sequence belongs to the NRP synthetase family.

Its pathway is alkaloid biosynthesis; ergot alkaloid biosynthesis. In terms of biological role, D-lysergyl-peptide-synthetase subunit 1; part of the gene cluster that mediates the biosynthesis of fungal ergot alkaloid ergovaline, the predominant ergopeptine product in E.festucae var. lolii. DmaW catalyzes the first step of ergot alkaloid biosynthesis by condensing dimethylallyl diphosphate (DMAP) and tryptophan to form 4-dimethylallyl-L-tryptophan. The second step is catalyzed by the methyltransferase easF that methylates 4-dimethylallyl-L-tryptophan in the presence of S-adenosyl-L-methionine, resulting in the formation of 4-dimethylallyl-L-abrine. The catalase easC and the FAD-dependent oxidoreductase easE then transform 4-dimethylallyl-L-abrine to chanoclavine-I which is further oxidized by easD in the presence of NAD(+), resulting in the formation of chanoclavine-I aldehyde. Agroclavine dehydrogenase easG then mediates the conversion of chanoclavine-I aldehyde to agroclavine via a non-enzymatic adduct reaction: the substrate is an iminium intermediate that is formed spontaneously from chanoclavine-I aldehyde in the presence of glutathione. The presence of easA is not required to complete this reaction. Further conversion of agroclavine to paspalic acid is a two-step process involving oxidation of agroclavine to elymoclavine and of elymoclavine to paspalic acid, the second step being performed by the elymoclavine oxidase cloA. Paspalic acid is then further converted to D-lysergic acid. Ergovaline is assembled from D-lysergic acid and three different amino acids by the D-lysergyl-peptide-synthetase composed of a monomudular (lpsB) and a trimodular (lpsA) nonribosomal peptide synthetase subunit. The polypeptide is D-lysergyl-peptide-synthetase subunit 1 (Epichloe festucae var. lolii (Neotyphodium lolii)).